The chain runs to 172 residues: Co-chaperone protein HscB homolog (172 aa).

Residues 2–69 (NHFELFNLPV…DSRAAYLLAL (68 aa)) enclose the J domain.

This sequence belongs to the HscB family. In terms of assembly, interacts with HscA and stimulates its ATPase activity.

In terms of biological role, co-chaperone involved in the maturation of iron-sulfur cluster-containing proteins. Seems to help targeting proteins to be folded toward HscA. The protein is Co-chaperone protein HscB homolog of Acinetobacter baumannii (strain AB307-0294).